Consider the following 350-residue polypeptide: Inhibin beta E chain (350 aa).

Positions 1–19 (MRLPDVQLWLVLLWALVRA) are cleaved as a signal peptide. Residues 20-236 (QGTGSVCPSC…EPGAGRARRR (217 aa)) constitute a propeptide that is removed on maturation. Asn-198 is a glycosylation site (N-linked (GlcNAc...) asparagine). 4 disulfide bridges follow: Cys-240–Cys-248, Cys-247–Cys-315, Cys-276–Cys-347, and Cys-280–Cys-349.

The protein belongs to the TGF-beta family. Homodimeric or heterodimeric through association with alpha and beta subunits, linked by one or more disulfide bonds. Inhibins are heterodimers of one alpha and one beta subunit. Activins are homo- or heterodimers of beta subunits only.

It is found in the secreted. In terms of biological role, inhibins and activins inhibit and activate, respectively, the secretion of follitropin by the pituitary gland. Inhibins/activins are involved in regulating a number of diverse functions such as hypothalamic and pituitary hormone secretion, gonadal hormone secretion, germ cell development and maturation, erythroid differentiation, insulin secretion, nerve cell survival, embryonic axial development or bone growth, depending on their subunit composition. Inhibins appear to oppose the functions of activins. Activin E is a homodimer of INHBE secreted by the liver that plays a crucial role in regulating metabolic homeostasis particularly in lipid metabolism and energy homeostasis. Plays a central role in the regulation of adipose tissue lipolysis by preventing the influx of fatty acids from adipose tissue into the liver. Mechanistically, signals via ACVR1C to activate SMAD2/3 signaling, suppressing PPARG target genes in adipose tissue, thereby reducing liver lipid content and improving glycemic control. Induces beige adipocyte formation and thermogenesis in response to cold exposure. This Homo sapiens (Human) protein is Inhibin beta E chain (INHBE).